The chain runs to 215 residues: 3-dehydroquinate dehydratase (215 aa).

Residues Ser-6, 31 to 33 (ELR), and Arg-64 each bind 3-dehydroquinate. His-111 acts as the Proton donor/acceptor in catalysis. Lys-138 serves as the catalytic Schiff-base intermediate with substrate. Residues Arg-174, Thr-193, and Gln-197 each contribute to the 3-dehydroquinate site.

It belongs to the type-I 3-dehydroquinase family. Homodimer.

It catalyses the reaction 3-dehydroquinate = 3-dehydroshikimate + H2O. The protein operates within metabolic intermediate biosynthesis; chorismate biosynthesis; chorismate from D-erythrose 4-phosphate and phosphoenolpyruvate: step 3/7. Functionally, involved in the third step of the chorismate pathway, which leads to the biosynthesis of aromatic amino acids. Catalyzes the cis-dehydration of 3-dehydroquinate (DHQ) and introduces the first double bond of the aromatic ring to yield 3-dehydroshikimate. This Ignicoccus hospitalis (strain KIN4/I / DSM 18386 / JCM 14125) protein is 3-dehydroquinate dehydratase.